The following is a 455-amino-acid chain: Growth/differentiation factor 6 (455 aa).

A signal peptide spans 1-22 (MDTPRVLLSAVFLISFLWDLPG). A propeptide spanning residues 23–335 (FQQASISSSS…LPSPGRRRRR (313 aa)) is cleaved from the precursor. The tract at residues 29–93 (SSSSSSAELG…EPPGRGPRVV (65 aa)) is disordered. Over residues 45–76 (SRKEGKMQRAPRDSDAGREGQEPQPRPQDEPR) the composition is skewed to basic and acidic residues. Residues 77 to 91 (AQQPRAQEPPGRGPR) are compositionally biased toward low complexity. Asn114 carries N-linked (GlcNAc...) asparagine glycosylation. Disordered regions lie at residues 244-267 (EAEARARGPQQPPPPDLRSLGFGR) and 300-351 (AEAA…KKSR). Residues 330-351 (GRRRRRTAFASRHGKRHGKKSR) are compositionally biased toward basic residues. 3 disulfide bridges follow: Cys354–Cys420, Cys383–Cys452, and Cys387–Cys454.

Belongs to the TGF-beta family. In terms of assembly, homodimer; disulfide-linked.

The protein localises to the secreted. Its function is as follows. Growth factor that controls proliferation and cellular differentiation in the retina and bone formation. Plays a key role in regulating apoptosis during retinal development. Establishes dorsal-ventral positional information in the retina and controls the formation of the retinotectal map. Required for normal formation of bones and joints in the limbs, skull, digits and axial skeleton. Plays a key role in establishing boundaries between skeletal elements during development. Regulation of GDF6 expression seems to be a mechanism for evolving species-specific changes in skeletal structures. Seems to positively regulate differentiation of chondrogenic tissue through the growth factor receptors subunits BMPR1A, BMPR1B, BMPR2 and ACVR2A, leading to the activation of SMAD1-SMAD5-SMAD8 complex. The regulation of chondrogenic differentiation is inhibited by NOG. Also involved in the induction of adipogenesis from mesenchymal stem cells. This mechanism acts through the growth factor receptors subunits BMPR1A, BMPR2 and ACVR2A and the activation of SMAD1-SMAD5-SMAD8 complex and MAPK14/p38. The protein is Growth/differentiation factor 6 (GDF6) of Homo sapiens (Human).